A 480-amino-acid polypeptide reads, in one-letter code: G-rich sequence factor 1 (480 aa).

A mitochondrion-targeting transit peptide spans 1-117; that stretch reads MAGTRWVLGA…AAAAVPTRSY (117 aa). 2 RRM domains span residues 122 to 246 and 250 to 326; these read KTTY…SSPV and GVVR…PSRR. Ser-244 is subject to Phosphoserine. Phosphoserine is present on Ser-335. The RRM 3 domain occupies 401–480; that stretch reads HFVHMRGLPF…LFLNSCPKGK (80 aa).

In terms of assembly, monomer. Found in a complex with DDX28, DHX30, FASTKD2 and FASTKD5. Interacts with the mitochondrial RNase P complex subunit TRMT10C/MRPP1. Interacts with the 2 components of the mitochondrial degradosome complex, PNPT1 and SUPV3L1, in an RNA-dependent manner.

It is found in the mitochondrion matrix. The protein resides in the cytoplasm. Its function is as follows. Regulator of post-transcriptional mitochondrial gene expression, required for assembly of the mitochondrial ribosome and for recruitment of mRNA and lncRNA. Binds RNAs containing the 14 base G-rich element. Preferentially binds RNAs transcribed from three contiguous genes on the light strand of mtDNA, the ND6 mRNA, and the long non-coding RNAs for MT-CYB and MT-ND5, each of which contains multiple consensus binding sequences. Involved in the degradosome-mediated decay of non-coding mitochondrial transcripts (MT-ncRNA) and tRNA-like molecules. Acts by unwinding G-quadruplex RNA structures in MT-ncRNA, thus facilitating their degradation by the degradosome. G-quadruplexes (G4) are non-canonical 4 stranded structures formed by transcripts from the light strand of mtDNA. The polypeptide is G-rich sequence factor 1 (GRSF1) (Homo sapiens (Human)).